The sequence spans 152 residues: Cytosolic calcium-binding protein 1 (152 aa).

7 repeat units span residues 57 to 62 (VEETEK), 67 to 71 (TEEAQ), 78 to 82 (VEIKK), 104 to 108 (VEAKK), 112 to 116 (VEEKK), 124 to 129 (VEEEKK), and 131 to 136 (EAEEEK). Residues 57-136 (VEETEKPIEE…EKKPEAEEEK (80 aa)) form a 7 X 5 AA approximate repeats of V-E-E-K-K region. The segment at 60–152 (TEKPIEETEE…VTAPVEKADE (93 aa)) is disordered. Over residues 96 to 138 (DESKTEEVVEAKKEEEVEEKKTEEAPVVVEEEKKPEAEEEKPA) the composition is skewed to basic and acidic residues.

As to expression, predominantly expressed in petioles (at protein level). Mainly observed in shoots, flowers, siliques and roots, and, to a lower extent, in stems and leaves.

It localises to the cytoplasm. It is found in the cytosol. Its function is as follows. Binds calcium Ca(2+) and may act as a signal mediator to buffer Ca(2+). This chain is Cytosolic calcium-binding protein 1, found in Arabidopsis thaliana (Mouse-ear cress).